A 190-amino-acid chain; its full sequence is ATP synthase subunit b 1 (190 aa).

The chain crosses the membrane as a helical span at residues 35–55 (DFVVLLGFLLFLAILFYFGVP).

This sequence belongs to the ATPase B chain family. F-type ATPases have 2 components, F(1) - the catalytic core - and F(0) - the membrane proton channel. F(1) has five subunits: alpha(3), beta(3), gamma(1), delta(1), epsilon(1). F(0) has three main subunits: a(1), b(2) and c(10-14). The alpha and beta chains form an alternating ring which encloses part of the gamma chain. F(1) is attached to F(0) by a central stalk formed by the gamma and epsilon chains, while a peripheral stalk is formed by the delta and b chains.

It localises to the cell inner membrane. F(1)F(0) ATP synthase produces ATP from ADP in the presence of a proton or sodium gradient. F-type ATPases consist of two structural domains, F(1) containing the extramembraneous catalytic core and F(0) containing the membrane proton channel, linked together by a central stalk and a peripheral stalk. During catalysis, ATP synthesis in the catalytic domain of F(1) is coupled via a rotary mechanism of the central stalk subunits to proton translocation. In terms of biological role, component of the F(0) channel, it forms part of the peripheral stalk, linking F(1) to F(0). The sequence is that of ATP synthase subunit b 1 from Jannaschia sp. (strain CCS1).